A 330-amino-acid polypeptide reads, in one-letter code: Molybdate/tungstate import ATP-binding protein WtpC (330 aa).

Residues Leu3–Leu232 form the ABC transporter domain. Gly34–Thr41 contributes to the ATP binding site.

The protein belongs to the ABC transporter superfamily. Sulfate/tungstate importer (TC 3.A.1.6) family. As to quaternary structure, the complex is composed of two ATP-binding proteins (WtpC), two transmembrane proteins (WtpB) and a solute-binding protein (WtpA).

It is found in the cell membrane. The catalysed reaction is tungstate(in) + ATP + H2O = tungstate(out) + ADP + phosphate + H(+). Its function is as follows. Part of the ABC transporter complex WtpABC involved in molybdate/tungstate import. Responsible for energy coupling to the transport system. This is Molybdate/tungstate import ATP-binding protein WtpC (wtpC) from Thermococcus kodakarensis (strain ATCC BAA-918 / JCM 12380 / KOD1) (Pyrococcus kodakaraensis (strain KOD1)).